The primary structure comprises 428 residues: Serine--tRNA ligase (428 aa).

Position 235-237 (235-237 (TAE)) interacts with L-serine. Residue 266–268 (RSE) coordinates ATP. Glu289 serves as a coordination point for L-serine. 353–356 (EISS) provides a ligand contact to ATP. Ser389 contacts L-serine.

This sequence belongs to the class-II aminoacyl-tRNA synthetase family. Type-1 seryl-tRNA synthetase subfamily. As to quaternary structure, homodimer. The tRNA molecule binds across the dimer.

It localises to the cytoplasm. It catalyses the reaction tRNA(Ser) + L-serine + ATP = L-seryl-tRNA(Ser) + AMP + diphosphate + H(+). The catalysed reaction is tRNA(Sec) + L-serine + ATP = L-seryl-tRNA(Sec) + AMP + diphosphate + H(+). It participates in aminoacyl-tRNA biosynthesis; selenocysteinyl-tRNA(Sec) biosynthesis; L-seryl-tRNA(Sec) from L-serine and tRNA(Sec): step 1/1. Its function is as follows. Catalyzes the attachment of serine to tRNA(Ser). Is also able to aminoacylate tRNA(Sec) with serine, to form the misacylated tRNA L-seryl-tRNA(Sec), which will be further converted into selenocysteinyl-tRNA(Sec). In Shewanella amazonensis (strain ATCC BAA-1098 / SB2B), this protein is Serine--tRNA ligase.